Here is a 469-residue protein sequence, read N- to C-terminus: UDP-N-acetylmuramate--L-alanine ligase (469 aa).

122 to 128 (GTHGKTT) serves as a coordination point for ATP.

Belongs to the MurCDEF family.

Its subcellular location is the cytoplasm. It carries out the reaction UDP-N-acetyl-alpha-D-muramate + L-alanine + ATP = UDP-N-acetyl-alpha-D-muramoyl-L-alanine + ADP + phosphate + H(+). It functions in the pathway cell wall biogenesis; peptidoglycan biosynthesis. In terms of biological role, cell wall formation. The protein is UDP-N-acetylmuramate--L-alanine ligase of Legionella pneumophila subsp. pneumophila (strain Philadelphia 1 / ATCC 33152 / DSM 7513).